Consider the following 2527-residue polypeptide: Leucine-rich repeat serine/threonine-protein kinase 2 (2527 aa).

The interval 1–969 (MASGACQGCE…RSSRLPSHMR (969 aa)) is required for RAB29-mediated activation. Residues 9–33 (CEEEEEEEALKKLIVRLNNVQEGKQ) adopt a coiled-coil conformation. 4 positions are modified to phosphoserine: Ser-910, Ser-935, Ser-955, and Ser-973. The segment at 957-979 (ESLRSSRLPSHMRQSDSSSSLAS) is disordered. Low complexity predominate over residues 961-978 (SSRLPSHMRQSDSSSSLA). 13 LRR repeats span residues 983–1004 (HITS…SQKC), 1012–1033 (HLTK…LCET), 1036–1057 (CLIH…VLKM), 1059–1080 (RITN…DPAM), 1084–1105 (SLKQ…LAQV), 1108–1129 (KLEQ…LSLK), 1130–1150 (ELKI…DFLE), 1156–1171 (ESFS…MPAL), 1174–1196 (SITS…FSLP), 1197–1218 (HLRS…AHWK), 1221–1245 (NLRE…HVWS), 1246–1267 (RVEK…IGCL), and 1269–1291 (NLTS…MGKL). Ser-1292 is modified (phosphoserine; by autocatalysis). The Roc domain occupies 1328–1511 (KAVPYNRMKL…KTIINESLNF (184 aa)). Residue 1341–1348 (GNTGSGKT) coordinates GTP. Ser-1444 carries the post-translational modification Phosphoserine. The 198-residue stretch at 1543–1740 (TEFPVINRKH…RMYWRQGIYL (198 aa)) folds into the COR domain. One can recognise a Protein kinase domain in the interval 1879–2146 (EAPEFLLGDG…LICLMRHILI (268 aa)). The ATP site is built by Leu-1885, Asp-1887, Gly-1888, Gly-1891, Val-1893, Ala-1904, Lys-1906, Met-1947, Glu-1948, Ala-1950, Ser-1954, and Arg-1957. The active-site Proton acceptor is Asp-1994. ATP-binding residues include His-1998, Leu-2001, Ala-2016, and Asp-2017. 2098–2121 (EYGCAPWPMVEKLITKCLKENPQE) contributes to the GTP binding site. 7 WD repeats span residues 2139–2183 (CLMR…SLFD), 2188–2228 (RYSY…LVIN), 2233–2276 (TKRH…MIFE), 2281–2327 (KCKG…FSFS), 2333–2377 (QKLI…EVWD), 2402–2438 (KESK…LLLD), and 2443–2497 (RVIR…SIWD). GTP is bound at residue 2295–2298 (DVST).

The protein belongs to the protein kinase superfamily. TKL Ser/Thr protein kinase family. As to quaternary structure, homodimer. Homotetramer; when activated by GTP-bound RAB29. Interacts with PRKN, PRDX3 and TPCN2. Interacts with VPS35. Interacts (via N-terminus) with RAB29; this interaction is direct and stimulates kinase activity. Interacts (via ROC domain) with SEC16A. Interacts with APP; interaction promotes phosphorylation of 'Thr-743' of APP. Interacts with MAPT. Interacts with RAB8A, RAB10, and RAB12. Interacts (via N-terminus) with RAB32. Interacts with YWHAG; this interaction is dependent on phosphorylation of Ser-910 and either Ser-935 or Ser-1444. Interacts with SFN; this interaction is dependent on phosphorylation of Ser-910 and/or Ser-935. Mg(2+) is required as a cofactor. In terms of processing, autophosphorylated at Ser-1292. Autophosphorylation is stimulated by RAB29. Phosphorylation of Ser-910 and Ser-935 or Ser-1444 facilitates interaction with YWHAG. Phosphorylation of Ser-910 and/or Ser-935 facilitates interaction with SFN. Post-translationally, ubiquitinated by TRIM1; undergoes 'Lys-48'-linked polyubiquitination leading to proteasomal degradation. In terms of tissue distribution, expressed in the brain (at protein level). Detected throughout the adult brain. Expressed in deep cerebral cortex layers, superficial cingulate cortex layers, the piriform cortex, hippocampal formation, caudate putamen, substantia nigra, the basolateral and basomedial anterior amygdala nuclei, reticular thalamic nucleus and also in the cerebellar granular cell layer. Highly expressed in the striatum, cortex and olfactory tubercle. Little or no expression in the substantia nigra, where dopaminergic neurons preferentially degenerate in Parkinson disease. Expression is particularly high in brain dopaminoceptive areas. High and strikingly specific expression in striatum and parts of cortex and no signals in dopamine neurons.

The protein resides in the cytoplasmic vesicle. It localises to the perikaryon. The protein localises to the cell projection. It is found in the axon. Its subcellular location is the dendrite. The protein resides in the golgi apparatus membrane. It localises to the endoplasmic reticulum membrane. The protein localises to the secretory vesicle. It is found in the synaptic vesicle membrane. Its subcellular location is the endosome. The protein resides in the lysosome. It localises to the mitochondrion outer membrane. The protein localises to the cytoplasm. It is found in the cytoskeleton. Its subcellular location is the phagosome. The enzyme catalyses L-threonyl-[protein] + ATP = O-phospho-L-threonyl-[protein] + ADP + H(+). It carries out the reaction L-seryl-[protein] + ATP = O-phospho-L-seryl-[protein] + ADP + H(+). The catalysed reaction is GTP + H2O = GDP + phosphate + H(+). With respect to regulation, kinase activity is regulated by the GTPase activity of the ROC domain. GTP-bound LRRK2 kinase activity is stimulated by RAB29. Phosphorylation of RAB10 'Thr-73' is stimulated by RAB29 and RAB32. Inhibited by small molecule inhibitors MLi-2 and LRRK2-IN-1. Functionally, serine/threonine-protein kinase which phosphorylates a broad range of proteins involved in multiple processes such as neuronal plasticity, innate immunity, autophagy, and vesicle trafficking. Is a key regulator of RAB GTPases by regulating the GTP/GDP exchange and interaction partners of RABs through phosphorylation. Phosphorylates RAB3A, RAB3B, RAB3C, RAB3D, RAB8A, RAB8B, RAB10, RAB12, RAB29, RAB35, and RAB43. Regulates the RAB3IP-catalyzed GDP/GTP exchange for RAB8A through the phosphorylation of 'Thr-72' on RAB8A. Inhibits the interaction between RAB8A and GDI1 and/or GDI2 by phosphorylating 'Thr-72' on RAB8A. Regulates primary ciliogenesis through phosphorylation of RAB8A and RAB10, which promotes SHH signaling in the brain. Together with RAB29, plays a role in the retrograde trafficking pathway for recycling proteins, such as mannose-6-phosphate receptor (M6PR), between lysosomes and the Golgi apparatus in a retromer-dependent manner. Regulates neuronal process morphology in the intact central nervous system (CNS). Plays an important role in recruiting SEC16A to endoplasmic reticulum exit sites (ERES) and in regulating ER to Golgi vesicle-mediated transport and ERES organization. Positively regulates autophagy through a calcium-dependent activation of the CaMKK/AMPK signaling pathway. The process involves activation of nicotinic acid adenine dinucleotide phosphate (NAADP) receptors, increase in lysosomal pH, and calcium release from lysosomes. Phosphorylates PRDX3. By phosphorylating APP on 'Thr-743', which promotes the production and the nuclear translocation of the APP intracellular domain (AICD), regulates dopaminergic neuron apoptosis. Acts as a positive regulator of innate immunity by mediating phosphorylation of RIPK2 downstream of NOD1 and NOD2, thereby enhancing RIPK2 activation. Independent of its kinase activity, inhibits the proteasomal degradation of MAPT, thus promoting MAPT oligomerization and secretion. In addition, has GTPase activity via its Roc domain which regulates LRKK2 kinase activity. Recruited by RAB29/RAB7L1 to overloaded lysosomes where it phosphorylates and stabilizes RAB8A and RAB10 which promote lysosomal content release and suppress lysosomal enlargement through the EHBP1 and EHBP1L1 effector proteins. The chain is Leucine-rich repeat serine/threonine-protein kinase 2 (Lrrk2) from Mus musculus (Mouse).